A 465-amino-acid polypeptide reads, in one-letter code: Ribulose bisphosphate carboxylase large chain (465 aa).

Lys4 carries the post-translational modification N6,N6,N6-trimethyllysine. 2 residues coordinate substrate: Asn113 and Thr163. Lys165 (proton acceptor) is an active-site residue. Residue Lys167 coordinates substrate. Residues Lys191, Asp193, and Glu194 each coordinate Mg(2+). Lys191 carries the N6-carboxylysine modification. His284 (proton acceptor) is an active-site residue. Substrate is bound by residues Arg285, His317, and Ser369.

Belongs to the RuBisCO large chain family. Type I subfamily. In terms of assembly, heterohexadecamer of 8 large chains and 8 small chains; disulfide-linked. The disulfide link is formed within the large subunit homodimers. Mg(2+) serves as cofactor. The disulfide bond which can form in the large chain dimeric partners within the hexadecamer appears to be associated with oxidative stress and protein turnover.

The protein localises to the plastid. It localises to the chloroplast. The enzyme catalyses 2 (2R)-3-phosphoglycerate + 2 H(+) = D-ribulose 1,5-bisphosphate + CO2 + H2O. It carries out the reaction D-ribulose 1,5-bisphosphate + O2 = 2-phosphoglycolate + (2R)-3-phosphoglycerate + 2 H(+). In terms of biological role, ruBisCO catalyzes two reactions: the carboxylation of D-ribulose 1,5-bisphosphate, the primary event in carbon dioxide fixation, as well as the oxidative fragmentation of the pentose substrate in the photorespiration process. Both reactions occur simultaneously and in competition at the same active site. The protein is Ribulose bisphosphate carboxylase large chain of Acer saccharum (Sugar maple).